Reading from the N-terminus, the 783-residue chain is MRWPCSSWFRGLWPEAAPWAVLLALGVPGWVLAVSATVAAVVPEQHVSSAGQAPLDWLLTDRGPFHRAQEYADFMERYRQGFTTRYRIYREFARWKVNNLALERRDFFSLPLPLAPEFVRNIRLLGRRPNLQQVTENLIKKYGTHFLLSATLGGEESLTIFVDKRKLSRKSETTGGIPVVGGTGNSSAVSLETLHQLAASYFIDRESTLRRLHHIQIATGAIKVTETRTGPLGCSNYDNLDSVSSVLVQSPENKVQLLGLQVLLPEHLRERFVAAALSYITCSSEGELVCRENDCWCKCSPTFPECNCPDADIQAMEDSLLQIQDSWATHNRQFEESEEFQTLLKRLPSDRFLNSTAISQYWTMDSNLQHRYQQLGASLKVLLKKMHRIVRRLFNLCKRCHRQPRFRLPKERSLSFWWNRIQSLLYCGESTFPGTFLEQSHSCTCPYDQSSCQGPIPCALGEGPACAHCASDNSTRCGSCNPGYVLAQGLCRPEVAESLENFLGLETDLQDLELKYLLQKRDSRIEVHSIFISNDMRLGSWFDPSWRKRMLLTLKSNKYKPGLVHVMLALSLQICLTKNSTLEPVMAIYVNPFGGSHSESWFMPVNEGNFPDWERTNVDAAAQCQNWTITLGNRWKTFFETVHVYLRSRIKSLDDSSNETIYYEPLEMTDPSKNLGYMKINTLQVFGYSLPFDPDAIRDLILQLDYPYTQGSQDSALLQLIELRDRVNQLSPPGKVRLDLFSCLLRHRLKLANNEVGRIQSSLRAFNSKLPNPVEYETGKLCS.

An N-terminal signal peptide occupies residues 1–33; that stretch reads MRWPCSSWFRGLWPEAAPWAVLLALGVPGWVLA. The MACPF domain occupies 85–281; the sequence is RYRIYREFAR…FVAAALSYIT (197 aa). N-linked (GlcNAc...) asparagine glycans are attached at residues N185, N354, N473, N579, N626, and N658.

Belongs to the BRINP family. In terms of tissue distribution, weakly expressed in embryonic stem (ES) cells. Strongly expressed in ES-derived neural stem cells (NSCs).

The protein resides in the secreted. Functionally, inhibits neuronal cell proliferation by negative regulation of the cell cycle transition. In Mus musculus (Mouse), this protein is BMP/retinoic acid-inducible neural-specific protein 2 (Brinp2).